Here is an 833-residue protein sequence, read N- to C-terminus: MDKEKSDPSCKSSDLKISNISIQVVSVPGKLPGRRLPRKPIGKARPRKQPKKRAPFWNVQNKIILFTVFLFILAVTAWTLLWLYISKTDSKDAFYFVGMFRITNIEFLPEYRQKESREFLSMAKTVQQVVNLVYTTSAFSKFYKQSVVADVSSNNKGGLLVHFWIVFVMPHAKGHIFCEECVAAILKDSIQTSITNRTSVGTLQGLAVDMDSVVLNAGLRSDYSSAVGSDNGCSQYFYADHLTLRYPLEISATSGQLMCHFKLVAIVGYLIRLSIESIQLEADNCITDSLTVYDSLLPIRITCVLLSGYRICEPTRTLMSFVSTNNLMLVTLKSPYVRRLAGIRAYFEVIPEQKCENTILVKEINSFEGKISSPYYPSYYPPKCKCNWTFQTSLSTLGIALKFHNYSITKKSMKGCEHGWWEINEHMYCGSYMDHETIFRVPSPLVHIQLQCSSRLSDKPLLVEYGSYNISQPCPAGSFRCSSGLCVPQAQRCDGVNDCFDESDELFCVTAKPACNTSIFRQHGPLVCDGFQDCEDGQDEQNCTRSIPCTNRTFKCGNDICFRKQNAQCDGIVDCPDRSDEEGCGCSRSSPFLHRVVGGSDSQEGTWPWQVSLHFVGSAHCGASVISREWLLSAAHCFHGNRLSDPTPWTAHLGMYVQGNAKFVSPVRRIVVHEYYNSQTFDYDIALLQLSIAWPETLRQLIQPICIPPVGQRVRSGEKCWVTGWGRRHEADSKGSPILQQAEVELIDQTVCVSTYGIITSRMLCAGVMSGKSDACKGDSGGPLSCRRKSDGKWILTGIVSWGYGCGRPNFPGVYTRVSNFVPWIHKYVPSLL.

Over 1–62 the chain is Cytoplasmic; the sequence is MDKEKSDPSC…RAPFWNVQNK (62 aa). The disordered stretch occupies residues 30–49; the sequence is KLPGRRLPRKPIGKARPRKQ. Over residues 32–49 the composition is skewed to basic residues; the sequence is PGRRLPRKPIGKARPRKQ. Residues 63 to 83 traverse the membrane as a helical; Signal-anchor for type II membrane protein segment; that stretch reads IILFTVFLFILAVTAWTLLWL. At 84-829 the chain is on the extracellular side; that stretch reads YISKTDSKDA…NFVPWIHKYV (746 aa). One can recognise an SEA domain in the interval 92–220; it reads DAFYFVGMFR…DSVVLNAGLR (129 aa). Residue Asn-196 is glycosylated (N-linked (GlcNAc...) asparagine). Disulfide bonds link Cys-233-Cys-259, Cys-285-Cys-312, and Cys-355-Cys-386. CUB domains are found at residues 233–350 and 355–471; these read CSQY…FEVI and CENT…YNIS. Residues Asn-405 and Asn-469 are each glycosylated (N-linked (GlcNAc...) asparagine). 2 consecutive LDL-receptor class A domains span residues 473–509 and 548–585; these read PCPA…LFCV and PCTN…EGCG. Cystine bridges form between Cys-474/Cys-486, Cys-481/Cys-499, Cys-493/Cys-508, Cys-549/Cys-561, Cys-556/Cys-575, Cys-569/Cys-584, and Cys-621/Cys-637. One can recognise a Peptidase S1 domain in the interval 596–830; the sequence is VVGGSDSQEG…FVPWIHKYVP (235 aa). Catalysis depends on charge relay system residues His-636 and Asp-684. 3 cysteine pairs are disulfide-bonded: Cys-720–Cys-786, Cys-752–Cys-765, and Cys-776–Cys-806. Ser-780 serves as the catalytic Charge relay system.

It belongs to the peptidase S1 family. As to quaternary structure, forms a heterodimer with SERPINA5. In terms of processing, N-glycosylated.

The protein resides in the cell membrane. Its function is as follows. Serine protease which preferentially hydrolyzes peptides with Arg at the P1 position. The protein is Transmembrane protease serine 7 of Rattus norvegicus (Rat).